Reading from the N-terminus, the 255-residue chain is Accessory gland-specific peptide 26Aa (255 aa).

The signal sequence occupies residues 1–18; sequence MNQILLCSQILLLLFAVA. The disordered stretch occupies residues 86 to 110; it reads PINNSKSRKNSSTLPSQILTDKPNQ. Positions 87-110 are enriched in polar residues; the sequence is INNSKSRKNSSTLPSQILTDKPNQ. Residues N88, N95, and N136 are each glycosylated (N-linked (GlcNAc...) asparagine). Disordered regions lie at residues 177 to 197 and 235 to 255; these read NAQN…KDIA and NNPA…PSTT. Positions 183-192 are enriched in basic residues; it reads KPTKSCKKRP. Positions 245-255 are enriched in polar residues; that stretch reads KSPSEGNPSTT.

In terms of processing, it undergoes several cleavages as it is secreted and it is further processed in the recipient female. In terms of tissue distribution, main cells of the accessory glands of males.

The protein localises to the secreted. The protein resides in the extracellular space. Functionally, this protein is transferred from male to female's hemolymph during mating, affecting egglaying and behavior after mating. The polypeptide is Accessory gland-specific peptide 26Aa (Acp26Aa) (Drosophila simulans (Fruit fly)).